A 371-amino-acid polypeptide reads, in one-letter code: Chaperone protein DnaJ (371 aa).

One can recognise a J domain in the interval 5–70 (SYYDILGVSK…KKRQAYDQFG (66 aa)). A CR-type zinc finger spans residues 139 to 217 (GREYKIEIPR…CGGQGLQEKR (79 aa)). C152, C155, C169, C172, C191, C194, C205, and C208 together coordinate Zn(2+). 4 CXXCXGXG motif repeats span residues 152–159 (CGDCNGSG), 169–176 (CPDCGGSG), 191–198 (CPTCRGKG), and 205–212 (CKTCGGQG).

It belongs to the DnaJ family. Homodimer. Zn(2+) serves as cofactor.

It localises to the cytoplasm. Functionally, participates actively in the response to hyperosmotic and heat shock by preventing the aggregation of stress-denatured proteins and by disaggregating proteins, also in an autonomous, DnaK-independent fashion. Unfolded proteins bind initially to DnaJ; upon interaction with the DnaJ-bound protein, DnaK hydrolyzes its bound ATP, resulting in the formation of a stable complex. GrpE releases ADP from DnaK; ATP binding to DnaK triggers the release of the substrate protein, thus completing the reaction cycle. Several rounds of ATP-dependent interactions between DnaJ, DnaK and GrpE are required for fully efficient folding. Also involved, together with DnaK and GrpE, in the DNA replication of plasmids through activation of initiation proteins. The chain is Chaperone protein DnaJ from Leptospira borgpetersenii serovar Hardjo-bovis (strain JB197).